Here is a 432-residue protein sequence, read N- to C-terminus: Proline--tRNA ligase (432 aa).

The protein belongs to the class-II aminoacyl-tRNA synthetase family. ProS type 2 subfamily. In terms of assembly, homodimer.

The protein localises to the cytoplasm. It carries out the reaction tRNA(Pro) + L-proline + ATP = L-prolyl-tRNA(Pro) + AMP + diphosphate. In terms of biological role, catalyzes the attachment of proline to tRNA(Pro) in a two-step reaction: proline is first activated by ATP to form Pro-AMP and then transferred to the acceptor end of tRNA(Pro). The protein is Proline--tRNA ligase of Rickettsia prowazekii (strain Madrid E).